Consider the following 710-residue polypeptide: Prolyl endopeptidase (710 aa).

Met1 carries the post-translational modification N-acetylmethionine. Residue Lys157 is modified to N6-acetyllysine. Active-site charge relay system residues include Ser554, Asp641, and His680.

This sequence belongs to the peptidase S9A family.

It is found in the cytoplasm. The catalysed reaction is Hydrolysis of Pro-|-Xaa &gt;&gt; Ala-|-Xaa in oligopeptides.. Functionally, cleaves peptide bonds on the C-terminal side of prolyl residues within peptides that are up to approximately 30 amino acids long. The chain is Prolyl endopeptidase (Prep) from Mus musculus (Mouse).